The following is a 233-amino-acid chain: tRNA (guanine-N(7)-)-methyltransferase (233 aa).

The interval 1-36 (MSEFDPNPPRRNFYGRRHGKTLRQSQKGYLSEDLGS) is disordered. Residues E68, E93, D120, and D142 each contribute to the S-adenosyl-L-methionine site. D142 is an active-site residue. Residues K146, D178, and 211-214 (TRYE) contribute to the substrate site.

The protein belongs to the class I-like SAM-binding methyltransferase superfamily. TrmB family.

It catalyses the reaction guanosine(46) in tRNA + S-adenosyl-L-methionine = N(7)-methylguanosine(46) in tRNA + S-adenosyl-L-homocysteine. It functions in the pathway tRNA modification; N(7)-methylguanine-tRNA biosynthesis. In terms of biological role, catalyzes the formation of N(7)-methylguanine at position 46 (m7G46) in tRNA. The chain is tRNA (guanine-N(7)-)-methyltransferase from Paracoccus denitrificans (strain Pd 1222).